A 433-amino-acid chain; its full sequence is Trigger factor (433 aa).

The PPIase FKBP-type domain occupies 161–246 (EDRVVIDFVG…LKKVENIVLP (86 aa)).

It belongs to the FKBP-type PPIase family. Tig subfamily.

The protein localises to the cytoplasm. The enzyme catalyses [protein]-peptidylproline (omega=180) = [protein]-peptidylproline (omega=0). Involved in protein export. Acts as a chaperone by maintaining the newly synthesized protein in an open conformation. Functions as a peptidyl-prolyl cis-trans isomerase. This Actinobacillus pleuropneumoniae serotype 5b (strain L20) protein is Trigger factor.